The primary structure comprises 34 residues: Photosystem II reaction center protein M (34 aa).

The chain crosses the membrane as a helical span at residues 5–25 (ILAFIATALFILVPTSFLLII).

Belongs to the PsbM family. PSII is composed of 1 copy each of membrane proteins PsbA, PsbB, PsbC, PsbD, PsbE, PsbF, PsbH, PsbI, PsbJ, PsbK, PsbL, PsbM, PsbT, PsbX, PsbY, PsbZ, Psb30/Ycf12, at least 3 peripheral proteins of the oxygen-evolving complex and a large number of cofactors. It forms dimeric complexes.

It is found in the plastid. Its subcellular location is the chloroplast thylakoid membrane. One of the components of the core complex of photosystem II (PSII). PSII is a light-driven water:plastoquinone oxidoreductase that uses light energy to abstract electrons from H(2)O, generating O(2) and a proton gradient subsequently used for ATP formation. It consists of a core antenna complex that captures photons, and an electron transfer chain that converts photonic excitation into a charge separation. This subunit is found at the monomer-monomer interface. The polypeptide is Photosystem II reaction center protein M (Triticum aestivum (Wheat)).